The primary structure comprises 422 residues: Elongation factor 1-alpha (422 aa).

Residues 5–221 (KPHMNLAVIG…NSLKEPEKPS (217 aa)) enclose the tr-type G domain. Positions 14–21 (GHIDHGKS) are G1. 14-21 (GHIDHGKS) is a GTP binding site. Serine 21 contributes to the Mg(2+) binding site. The segment at 70–74 (GITID) is G2. The interval 91–94 (DCPG) is G3. GTP is bound by residues 91-95 (DCPGH) and 146-149 (NKMD). The tract at residues 146 to 149 (NKMD) is G4. The tract at residues 185–187 (SAF) is G5.

This sequence belongs to the TRAFAC class translation factor GTPase superfamily. Classic translation factor GTPase family. EF-Tu/EF-1A subfamily.

It localises to the cytoplasm. It carries out the reaction GTP + H2O = GDP + phosphate + H(+). Its function is as follows. GTP hydrolase that promotes the GTP-dependent binding of aminoacyl-tRNA to the A-site of ribosomes during protein biosynthesis. The sequence is that of Elongation factor 1-alpha from Methanosarcina mazei (strain ATCC BAA-159 / DSM 3647 / Goe1 / Go1 / JCM 11833 / OCM 88) (Methanosarcina frisia).